A 253-amino-acid polypeptide reads, in one-letter code: Type III pantothenate kinase (253 aa).

Position 6–13 (6–13 (DVGNTNIV)) interacts with ATP. 107 to 110 (GADR) serves as a coordination point for substrate. Residue aspartate 109 is the Proton acceptor of the active site. Aspartate 129 contributes to the K(+) binding site. Threonine 132 contacts ATP. Threonine 184 is a binding site for substrate.

Belongs to the type III pantothenate kinase family. In terms of assembly, homodimer. NH4(+) serves as cofactor. K(+) is required as a cofactor.

The protein resides in the cytoplasm. The enzyme catalyses (R)-pantothenate + ATP = (R)-4'-phosphopantothenate + ADP + H(+). It participates in cofactor biosynthesis; coenzyme A biosynthesis; CoA from (R)-pantothenate: step 1/5. In terms of biological role, catalyzes the phosphorylation of pantothenate (Pan), the first step in CoA biosynthesis. In Exiguobacterium sibiricum (strain DSM 17290 / CCUG 55495 / CIP 109462 / JCM 13490 / 255-15), this protein is Type III pantothenate kinase.